A 387-amino-acid chain; its full sequence is ATP phosphoribosyltransferase regulatory subunit (387 aa).

Belongs to the class-II aminoacyl-tRNA synthetase family. HisZ subfamily. As to quaternary structure, heteromultimer composed of HisG and HisZ subunits.

It localises to the cytoplasm. It participates in amino-acid biosynthesis; L-histidine biosynthesis; L-histidine from 5-phospho-alpha-D-ribose 1-diphosphate: step 1/9. Functionally, required for the first step of histidine biosynthesis. May allow the feedback regulation of ATP phosphoribosyltransferase activity by histidine. This Polynucleobacter necessarius subsp. necessarius (strain STIR1) protein is ATP phosphoribosyltransferase regulatory subunit.